The primary structure comprises 163 residues: Endoribonuclease YbeY (163 aa).

The Zn(2+) site is built by His-121, His-125, and His-131.

This sequence belongs to the endoribonuclease YbeY family. It depends on Zn(2+) as a cofactor.

It localises to the cytoplasm. Its function is as follows. Single strand-specific metallo-endoribonuclease involved in late-stage 70S ribosome quality control and in maturation of the 3' terminus of the 16S rRNA. The protein is Endoribonuclease YbeY of Synechococcus sp. (strain JA-3-3Ab) (Cyanobacteria bacterium Yellowstone A-Prime).